A 133-amino-acid polypeptide reads, in one-letter code: MAKEFGRPQRVAQEMQKEIALILQREIKDPRVGMMTTVSGVEMSRDLAYAKVFVTFLNDQDEAAVKNGIKALQEASGFIRSLLGKAMRLRIVPELTFFYDNSLVEGMRMSNLVTTVVKHDDERRVNPDDEKED.

The protein belongs to the RbfA family. As to quaternary structure, monomer. Binds 30S ribosomal subunits, but not 50S ribosomal subunits or 70S ribosomes.

Its subcellular location is the cytoplasm. Its function is as follows. One of several proteins that assist in the late maturation steps of the functional core of the 30S ribosomal subunit. Associates with free 30S ribosomal subunits (but not with 30S subunits that are part of 70S ribosomes or polysomes). Required for efficient processing of 16S rRNA. May interact with the 5'-terminal helix region of 16S rRNA. The chain is Ribosome-binding factor A from Enterobacter sp. (strain 638).